Here is a 140-residue protein sequence, read N- to C-terminus: Large-conductance mechanosensitive channel (140 aa).

3 helical membrane-spanning segments follow: residues 14-34 (VLDL…VKSL), 37-57 (YLIN…DWVL), and 66-86 (FGSF…VFIL).

The protein belongs to the MscL family. Homopentamer.

Its subcellular location is the cell membrane. Channel that opens in response to stretch forces in the membrane lipid bilayer. May participate in the regulation of osmotic pressure changes within the cell. This Pediococcus pentosaceus (strain ATCC 25745 / CCUG 21536 / LMG 10740 / 183-1w) protein is Large-conductance mechanosensitive channel.